The sequence spans 145 residues: MRALVQRVTSASVRVDGDEVGRITPPAGGHGLLVLVGVTHTDDEAKAALLAKKVWTMRILENEQSASDLDAPVLVASQFTLMADTRRGRRPSWSAAAPRPVAEPLVDEFTGALRELGATVETGVFGEHMEISLVNDGPVTLLIDV.

A Gly-cisPro motif, important for rejection of L-amino acids motif is present at residues Gly137–Pro138.

The protein belongs to the DTD family. Homodimer.

Its subcellular location is the cytoplasm. The catalysed reaction is glycyl-tRNA(Ala) + H2O = tRNA(Ala) + glycine + H(+). It catalyses the reaction a D-aminoacyl-tRNA + H2O = a tRNA + a D-alpha-amino acid + H(+). In terms of biological role, an aminoacyl-tRNA editing enzyme that deacylates mischarged D-aminoacyl-tRNAs. Also deacylates mischarged glycyl-tRNA(Ala), protecting cells against glycine mischarging by AlaRS. Acts via tRNA-based rather than protein-based catalysis; rejects L-amino acids rather than detecting D-amino acids in the active site. By recycling D-aminoacyl-tRNA to D-amino acids and free tRNA molecules, this enzyme counteracts the toxicity associated with the formation of D-aminoacyl-tRNA entities in vivo and helps enforce protein L-homochirality. In Rhodococcus jostii (strain RHA1), this protein is D-aminoacyl-tRNA deacylase.